The following is a 247-amino-acid chain: 4-nitrobenzoate reductase (247 aa).

29 to 33 provides a ligand contact to FMN; it reads RRSVR. NADP(+) is bound by residues S59, R112, Y120, and L126. R232 lines the FMN pocket.

This sequence belongs to the nitroreductase family. Requires FMN as cofactor.

It carries out the reaction 4-nitrobenzoate + 2 NADPH + 2 H(+) = 4-hydroxylaminobenzoate + 2 NADP(+) + H2O. Nitroreductase involved in the degradation of nitroaromatic compounds. Catalyzes the conversion of 4-nitrobenzoate to 4-hydroxylaminobenzoate. This is 4-nitrobenzoate reductase from Nocardioides sp. (strain LMS-CY).